Reading from the N-terminus, the 557-residue chain is Iron-sulfur cluster assembly SufBD family protein ABCI8, chloroplastic (557 aa).

Positions 1 to 47 (MASLLANGISSFSPQPTSDSSKSPKGFHPKPESLKFPSPKSLNPTRP) are disordered. A chloroplast-targeting transit peptide spans 1–52 (MASLLANGISSFSPQPTSDSSKSPKGFHPKPESLKFPSPKSLNPTRPIFKLR). Low complexity predominate over residues 10–24 (SSFSPQPTSDSSKSP).

It belongs to the iron-sulfur cluster assembly SufBD family.

The protein localises to the plastid. The protein resides in the chloroplast. Its function is as follows. Involved in light signaling, probably by mediating the transport and correct distribution of protoporphyrin IX, a chlorophyll precursor, in response to far-red light. The chain is Iron-sulfur cluster assembly SufBD family protein ABCI8, chloroplastic (ABCI8) from Arabidopsis thaliana (Mouse-ear cress).